The primary structure comprises 496 residues: ATP synthase subunit beta (496 aa).

Gly155–Thr162 contacts ATP.

Belongs to the ATPase alpha/beta chains family. In terms of assembly, F-type ATPases have 2 components, CF(1) - the catalytic core - and CF(0) - the membrane proton channel. CF(1) has five subunits: alpha(3), beta(3), gamma(1), delta(1), epsilon(1). CF(0) has three main subunits: a(1), b(2) and c(9-12). The alpha and beta chains form an alternating ring which encloses part of the gamma chain. CF(1) is attached to CF(0) by a central stalk formed by the gamma and epsilon chains, while a peripheral stalk is formed by the delta and b chains.

Its subcellular location is the cell membrane. It carries out the reaction ATP + H2O + 4 H(+)(in) = ADP + phosphate + 5 H(+)(out). Its function is as follows. Produces ATP from ADP in the presence of a proton gradient across the membrane. The catalytic sites are hosted primarily by the beta subunits. The polypeptide is ATP synthase subunit beta (Karelsulcia muelleri (strain GWSS) (Sulcia muelleri)).